The chain runs to 110 residues: Thiosulfate sulfurtransferase GlpE (110 aa).

In terms of domain architecture, Rhodanese spans 17–105 (RENGAQVVDI…WRSVYPADTS (89 aa)). The active-site Cysteine persulfide intermediate is cysteine 65.

Belongs to the GlpE family.

It is found in the cytoplasm. It catalyses the reaction thiosulfate + hydrogen cyanide = thiocyanate + sulfite + 2 H(+). The enzyme catalyses thiosulfate + [thioredoxin]-dithiol = [thioredoxin]-disulfide + hydrogen sulfide + sulfite + 2 H(+). Its function is as follows. Transferase that catalyzes the transfer of sulfur from thiosulfate to thiophilic acceptors such as cyanide or dithiols. May function in a CysM-independent thiosulfate assimilation pathway by catalyzing the conversion of thiosulfate to sulfite, which can then be used for L-cysteine biosynthesis. The sequence is that of Thiosulfate sulfurtransferase GlpE from Pseudomonas aeruginosa (strain LESB58).